Reading from the N-terminus, the 146-residue chain is 3-dehydroquinate dehydratase (146 aa).

Catalysis depends on tyrosine 23, which acts as the Proton acceptor. Substrate is bound by residues asparagine 74, histidine 80, and aspartate 87. The Proton donor role is filled by histidine 100. Substrate contacts are provided by residues 101–102 (IS) and arginine 111.

The protein belongs to the type-II 3-dehydroquinase family. Homododecamer.

It catalyses the reaction 3-dehydroquinate = 3-dehydroshikimate + H2O. It participates in metabolic intermediate biosynthesis; chorismate biosynthesis; chorismate from D-erythrose 4-phosphate and phosphoenolpyruvate: step 3/7. Catalyzes a trans-dehydration via an enolate intermediate. This is 3-dehydroquinate dehydratase from Bacillus cereus (strain ATCC 10987 / NRS 248).